Consider the following 779-residue polypeptide: DNA topoisomerase 1 (779 aa).

The 111-residue stretch at methionine 1–valine 111 folds into the Toprim domain. Residues glutamate 7 and aspartate 80 each coordinate Mg(2+). A Topo IA-type catalytic domain is found at aspartate 132–glutamate 568. The interaction with DNA stretch occupies residues serine 166–glutamine 171. Catalysis depends on tyrosine 304, which acts as the O-(5'-phospho-DNA)-tyrosine intermediate. Residues cysteine 600–cysteine 627 form a C4-type zinc finger.

This sequence belongs to the type IA topoisomerase family. In terms of assembly, monomer. Mg(2+) serves as cofactor.

The catalysed reaction is ATP-independent breakage of single-stranded DNA, followed by passage and rejoining.. Releases the supercoiling and torsional tension of DNA, which is introduced during the DNA replication and transcription, by transiently cleaving and rejoining one strand of the DNA duplex. Introduces a single-strand break via transesterification at a target site in duplex DNA. The scissile phosphodiester is attacked by the catalytic tyrosine of the enzyme, resulting in the formation of a DNA-(5'-phosphotyrosyl)-enzyme intermediate and the expulsion of a 3'-OH DNA strand. The free DNA strand then undergoes passage around the unbroken strand, thus removing DNA supercoils. Finally, in the religation step, the DNA 3'-OH attacks the covalent intermediate to expel the active-site tyrosine and restore the DNA phosphodiester backbone. In Rickettsia typhi (strain ATCC VR-144 / Wilmington), this protein is DNA topoisomerase 1.